We begin with the raw amino-acid sequence, 124 residues long: Small ribosomal subunit protein uS12 (124 aa).

The disordered stretch occupies residues 1 to 28 (MPTIQQLIRSERSKAKKKTKSPALKQCP). At D89 the chain carries 3-methylthioaspartic acid. A disordered region spans residues 101-124 (TLDAQGVKDRKQGRSKYGTKKPKE). Basic residues predominate over residues 113-124 (GRSKYGTKKPKE).

It belongs to the universal ribosomal protein uS12 family. As to quaternary structure, part of the 30S ribosomal subunit. Contacts proteins S8 and S17. May interact with IF1 in the 30S initiation complex.

In terms of biological role, with S4 and S5 plays an important role in translational accuracy. Its function is as follows. Interacts with and stabilizes bases of the 16S rRNA that are involved in tRNA selection in the A site and with the mRNA backbone. Located at the interface of the 30S and 50S subunits, it traverses the body of the 30S subunit contacting proteins on the other side and probably holding the rRNA structure together. The combined cluster of proteins S8, S12 and S17 appears to hold together the shoulder and platform of the 30S subunit. In Crocosphaera subtropica (strain ATCC 51142 / BH68) (Cyanothece sp. (strain ATCC 51142)), this protein is Small ribosomal subunit protein uS12.